The following is a 399-amino-acid chain: Protochlorophyllide reductase, chloroplastic (399 aa).

The transit peptide at 1–64 directs the protein to the chloroplast; it reads MALQTASMLP…RQKVGAVRAE (64 aa).

Belongs to the short-chain dehydrogenases/reductases (SDR) family. POR subfamily.

Its subcellular location is the plastid. The protein resides in the chloroplast. It catalyses the reaction chlorophyllide a + NADP(+) = protochlorophyllide a + NADPH + H(+). Its pathway is porphyrin-containing compound metabolism; chlorophyll biosynthesis. Its function is as follows. Phototransformation of protochlorophyllide (Pchlide) to chlorophyllide (Chlide). This is Protochlorophyllide reductase, chloroplastic (3PCR) from Pisum sativum (Garden pea).